The sequence spans 232 residues: Glycerol-3-phosphate acyltransferase (232 aa).

6 consecutive transmembrane segments (helical) span residues 4 to 24 (FLAIITVAYLIGSIPTSIIAG), 56 to 76 (AVTLIDIAKGTIAAVPVVAFF), 90 to 110 (IALNLIAGMSAVIGHVFTVFA), 124 to 144 (MLIGIAPISMLMVIGVFILAI), 147 to 167 (TRYVSVGSILAAIAFPLIIAI), and 191 to 211 (SLDYHLLIFGGIVAAAIIYTH).

It belongs to the PlsY family. As to quaternary structure, probably interacts with PlsX.

The protein resides in the cell inner membrane. It carries out the reaction an acyl phosphate + sn-glycerol 3-phosphate = a 1-acyl-sn-glycero-3-phosphate + phosphate. It participates in lipid metabolism; phospholipid metabolism. Its function is as follows. Catalyzes the transfer of an acyl group from acyl-phosphate (acyl-PO(4)) to glycerol-3-phosphate (G3P) to form lysophosphatidic acid (LPA). This enzyme utilizes acyl-phosphate as fatty acyl donor, but not acyl-CoA or acyl-ACP. This is Glycerol-3-phosphate acyltransferase from Chlorobaculum parvum (strain DSM 263 / NCIMB 8327) (Chlorobium vibrioforme subsp. thiosulfatophilum).